The sequence spans 332 residues: L-lactate dehydrogenase A chain (332 aa).

Residue Ala2 is modified to N-acetylalanine. The residue at position 5 (Lys5) is an N6-acetyllysine; alternate. Lys5 carries the post-translational modification N6-succinyllysine; alternate. Lys14 bears the N6-acetyllysine mark. 29 to 57 (GAVGMACAISILMKDLADEVALVDVMEDK) is a binding site for NAD(+). The residue at position 57 (Lys57) is an N6-acetyllysine; alternate. Lys57 participates in a covalent cross-link: Glycyl lysine isopeptide (Lys-Gly) (interchain with G-Cter in SUMO2); alternate. Residue Lys81 is modified to N6-acetyllysine. Arg106 serves as a coordination point for substrate. Lys118 carries the post-translational modification N6-acetyllysine; alternate. The residue at position 118 (Lys118) is an N6-succinyllysine; alternate. Lys126 is subject to N6-acetyllysine. Residue Asn138 coordinates NAD(+). 2 residues coordinate substrate: Asn138 and Arg169. His193 functions as the Proton acceptor in the catalytic mechanism. Lys224 and Lys232 each carry N6-acetyllysine. At Tyr239 the chain carries Phosphotyrosine. The residue at position 243 (Lys243) is an N6-acetyllysine. Thr248 provides a ligand contact to substrate. Thr309 is modified (phosphothreonine). Lys318 bears the N6-acetyllysine; alternate mark. Lys318 carries the N6-succinyllysine; alternate modification. At Thr322 the chain carries Phosphothreonine.

The protein belongs to the LDH/MDH superfamily. LDH family. Homotetramer. Interacts with PTEN upstream reading frame protein MP31. ISGylated.

Its subcellular location is the cytoplasm. It catalyses the reaction (S)-lactate + NAD(+) = pyruvate + NADH + H(+). The protein operates within fermentation; pyruvate fermentation to lactate; (S)-lactate from pyruvate: step 1/1. Functionally, interconverts simultaneously and stereospecifically pyruvate and lactate with concomitant interconversion of NADH and NAD(+). This chain is L-lactate dehydrogenase A chain (LDHA), found in Bos taurus (Bovine).